The chain runs to 105 residues: Small ribosomal subunit protein uS10 (105 aa).

The protein belongs to the universal ribosomal protein uS10 family. As to quaternary structure, part of the 30S ribosomal subunit.

Functionally, involved in the binding of tRNA to the ribosomes. The chain is Small ribosomal subunit protein uS10 from Nostoc punctiforme (strain ATCC 29133 / PCC 73102).